The following is a 595-amino-acid chain: 3-hydroxy-3-methylglutaryl-coenzyme A reductase 2 (595 aa).

The N-linked (GlcNAc...) asparagine glycan is linked to N35. 2 helical membrane passes run 48–68 (LPLYLTNGLFFTMFFSVMYFL) and 92–112 (AIVSLIASVIYLLGFFGIGFV). Residues 113 to 183 (QTFVSRGNND…SPLITPASSE (71 aa)) are linker. A glycan (N-linked (GlcNAc...) asparagine) is linked at N121. Residues 184-595 (EDEEIINSVV…KYNRSTKASS (412 aa)) are catalytic. E278 (charge relay system) is an active-site residue. N342 carries an N-linked (GlcNAc...) asparagine glycan. The active-site Charge relay system is K410. Residue N455 is glycosylated (N-linked (GlcNAc...) asparagine). Residue D486 is the Charge relay system of the active site. H584 functions as the Proton donor in the catalytic mechanism. N588 is a glycosylation site (N-linked (GlcNAc...) asparagine).

Belongs to the HMG-CoA reductase family. Expressed in young flowers and in mature sepals and ovaries.

Its subcellular location is the endoplasmic reticulum membrane. It carries out the reaction (R)-mevalonate + 2 NADP(+) + CoA = (3S)-3-hydroxy-3-methylglutaryl-CoA + 2 NADPH + 2 H(+). It participates in metabolic intermediate biosynthesis; (R)-mevalonate biosynthesis; (R)-mevalonate from acetyl-CoA: step 3/3. Functionally, catalyzes the synthesis of mevalonate. The specific precursor of all isoprenoid compounds present in plants. This is 3-hydroxy-3-methylglutaryl-coenzyme A reductase 2 (HMG2) from Solanum tuberosum (Potato).